Here is a 233-residue protein sequence, read N- to C-terminus: Large ribosomal subunit protein bL25 (233 aa).

The disordered stretch occupies residues 1 to 23 (MATVRELKATARPKSGKGAARAE).

Belongs to the bacterial ribosomal protein bL25 family. CTC subfamily. Part of the 50S ribosomal subunit; part of the 5S rRNA/L5/L18/L25 subcomplex. Contacts the 5S rRNA. Binds to the 5S rRNA independently of L5 and L18.

Its function is as follows. This is one of the proteins that binds to the 5S RNA in the ribosome where it forms part of the central protuberance. The chain is Large ribosomal subunit protein bL25 from Nitrobacter hamburgensis (strain DSM 10229 / NCIMB 13809 / X14).